The sequence spans 141 residues: Cystatin (141 aa).

Positions 1-26 are cleaved as a signal peptide; sequence MVHSQLPVVALLRLLCALLLLPSATM. Residues 29–129 enclose the Cystatin domain; sequence GGLSPRSVTD…CRFQVWSRPW (101 aa). Residues 73–77 carry the Secondary area of contact motif; it reads QVVAG. Disulfide bonds link cysteine 91–cysteine 107 and cysteine 120–cysteine 140.

This sequence belongs to the cystatin family. In terms of tissue distribution, expressed at a low level by the venom gland (at protein level).

It localises to the secreted. Its function is as follows. Inhibits various C1 cysteine proteases including cathepsin L, papain and cathepsin B. This protein has no toxic activity and its function in the venom is unknown. It may play a role as a housekeeping or regulatory protein. The protein is Cystatin of Notechis scutatus scutatus (Mainland tiger snake).